Reading from the N-terminus, the 346-residue chain is ATP-dependent (S)-NAD(P)H-hydrate dehydratase 2 (346 aa).

A disordered region spans residues 1–20; that stretch reads MMVHSPLATGPHPTTHLEPT. In terms of domain architecture, YjeF C-terminal spans 28-339; the sequence is LLRKAFQMIP…GYIGEAFEQV (312 aa). Residues Gly-135 and 188 to 194 each bind (6S)-NADPHX; that span reads NHVEFQR. ATP contacts are provided by residues 228-232 and 248-257; these read KGSID and GSPKRCGGQG. Asp-258 provides a ligand contact to (6S)-NADPHX.

This sequence belongs to the NnrD/CARKD family. Mg(2+) serves as cofactor.

Its subcellular location is the cytoplasm. It carries out the reaction (6S)-NADHX + ATP = ADP + phosphate + NADH + H(+). The catalysed reaction is (6S)-NADPHX + ATP = ADP + phosphate + NADPH + H(+). In terms of biological role, catalyzes the dehydration of the S-form of NAD(P)HX at the expense of ATP, which is converted to ADP. Together with NAD(P)HX epimerase, which catalyzes the epimerization of the S- and R-forms, the enzyme allows the repair of both epimers of NAD(P)HX, a damaged form of NAD(P)H that is a result of enzymatic or heat-dependent hydration. The protein is ATP-dependent (S)-NAD(P)H-hydrate dehydratase 2 of Puccinia graminis f. sp. tritici (strain CRL 75-36-700-3 / race SCCL) (Black stem rust fungus).